A 1024-amino-acid chain; its full sequence is Myosin phosphatase Rho-interacting protein (1024 aa).

An interaction with F-actin region spans residues 1 to 382 (MSAAKENPCR…DRRSTESSMT (382 aa)). A PH 1 domain is found at 43–150 (KPIYGGWLLL…WLEMLMVYPR (108 aa)). The tract at residues 152–262 (NKQNQKKKRK…GDRVDGGRKV (111 aa)) is disordered. Residues 179-190 (SSSGGSSGSSSS) are compositionally biased toward low complexity. A phosphoserine mark is found at S193, S219, S221, S225, and S227. Residues 221–233 (SPAQSPSQSQPPA) show a composition bias toward low complexity. The segment covering 240–262 (PGLESKEDESTISGDRVDGGRKV) has biased composition (basic and acidic residues). Phosphoserine is present on residues S266, S270, S289, and S292. 2 disordered regions span residues 274–301 (AKQD…SRRS) and 328–379 (PSSD…STES). Residue T295 is modified to Phosphothreonine. A compositionally biased stretch (basic and acidic residues) spans 333 to 349 (RQGRSERRAIPRKRDFA). A Phosphoserine modification is found at S364. Residues 386–482 (LNFKKGWLTK…WIQTIMKHVL (97 aa)) form the PH 2 domain. A disordered region spans residues 486–583 (APDVTSSLPE…AEPGELERER (98 aa)). The segment covering 488–508 (DVTSSLPEGKNKSTSFETCSR) has biased composition (polar residues). Position 492 is a phosphoserine (S492). The segment covering 522–545 (PEQKKSRARERRREGRSKTFDWAE) has biased composition (basic and acidic residues). The interaction with RHOA stretch occupies residues 545 to 823 (EFRPIQQALA…SVQRELEVLS (279 aa)). A Phosphoserine modification is found at S617. Residue T645 is modified to Phosphothreonine. A coiled-coil region spans residues 672-976 (HELTSLLEKE…AATEALGEKS (305 aa)). S799 carries the phosphoserine modification. Positions 823 to 878 (SEQYSQKCLENAHLAQALEAERQALRQCQRENQELNAHNQELNNRLAAEITRLRTL) are interaction with PPP1R12A. The interval 972-995 (LGEKSPEGTTVSGYDIMKSKSNPD) is disordered. S976, G979, S992, S1013, and S1015 each carry phosphoserine.

In terms of assembly, binds RHOA, PPP1R12A/MBS and PPP1R12C/MBS85 through adjacent coiled coil domains. Interacts with MYZAP. Binds F-actin through its N-terminus. In terms of tissue distribution, expressed in Kidney, Brain, Heart and Lung.

The protein localises to the cytoplasm. It is found in the cytoskeleton. Functionally, targets myosin phosphatase to the actin cytoskeleton. Required for the regulation of the actin cytoskeleton by RhoA and ROCK1. Depletion leads to an increased number of stress fibers in smooth muscle cells through stabilization of actin fibers by phosphorylated myosin. Overexpression of MRIP as well as its F-actin-binding region leads to disassembly of stress fibers in neuronal cells. In Mus musculus (Mouse), this protein is Myosin phosphatase Rho-interacting protein (Mprip).